Consider the following 311-residue polypeptide: Malate dehydrogenase (311 aa).

10 to 15 (GAGHTG) is a binding site for NAD(+). The substrate site is built by R85 and R91. NAD(+) contacts are provided by residues N98 and 121-123 (LTN). Residues N123 and R154 each coordinate substrate. H178 functions as the Proton acceptor in the catalytic mechanism.

This sequence belongs to the LDH/MDH superfamily. MDH type 3 family.

The catalysed reaction is (S)-malate + NAD(+) = oxaloacetate + NADH + H(+). Functionally, catalyzes the reversible oxidation of malate to oxaloacetate. This Staphylococcus carnosus (strain TM300) protein is Malate dehydrogenase.